Reading from the N-terminus, the 92-residue chain is DNA-directed RNA polymerase subunit omega (92 aa).

It belongs to the RNA polymerase subunit omega family. The RNAP catalytic core consists of 2 alpha, 1 beta, 1 beta' and 1 omega subunit. When a sigma factor is associated with the core the holoenzyme is formed, which can initiate transcription.

The catalysed reaction is RNA(n) + a ribonucleoside 5'-triphosphate = RNA(n+1) + diphosphate. Promotes RNA polymerase assembly. Latches the N- and C-terminal regions of the beta' subunit thereby facilitating its interaction with the beta and alpha subunits. This Shewanella amazonensis (strain ATCC BAA-1098 / SB2B) protein is DNA-directed RNA polymerase subunit omega.